The chain runs to 349 residues: Putative phytanoyl-CoA dioxygenase (349 aa).

2-oxoglutarate contacts are provided by residues K118 and 169–171 (HLD). H169 and D171 together coordinate Fe cation.

Belongs to the PhyH family. The cofactor is Fe cation. It depends on L-ascorbate as a cofactor.

The enzyme catalyses phytanoyl-CoA + 2-oxoglutarate + O2 = 2-hydroxyphytanoyl-CoA + succinate + CO2. Its pathway is lipid metabolism; fatty acid metabolism. Converts phytanoyl-CoA to 2-hydroxyphytanoyl-CoA. The protein is Putative phytanoyl-CoA dioxygenase of Dictyostelium discoideum (Social amoeba).